The sequence spans 308 residues: HPr kinase/phosphorylase (308 aa).

Catalysis depends on residues H138 and K159. 153 to 160 contacts ATP; the sequence is GESGLGKS. S160 is a Mg(2+) binding site. Catalysis depends on D177, which acts as the Proton acceptor; for phosphorylation activity. Proton donor; for dephosphorylation activity. Positions 201 to 210 are important for the catalytic mechanism of both phosphorylation and dephosphorylation; it reads LEVRGLGLLD. A Mg(2+)-binding site is contributed by E202. Residue R243 is part of the active site. The important for the catalytic mechanism of dephosphorylation stretch occupies residues 264–269; the sequence is QVAAGR.

It belongs to the HPrK/P family. As to quaternary structure, homohexamer. Mg(2+) is required as a cofactor.

It carries out the reaction [HPr protein]-L-serine + ATP = [HPr protein]-O-phospho-L-serine + ADP + H(+). The catalysed reaction is [HPr protein]-O-phospho-L-serine + phosphate + H(+) = [HPr protein]-L-serine + diphosphate. Functionally, catalyzes the ATP- as well as the pyrophosphate-dependent phosphorylation of a specific serine residue in HPr, a phosphocarrier protein of the phosphoenolpyruvate-dependent sugar phosphotransferase system (PTS). HprK/P also catalyzes the pyrophosphate-producing, inorganic phosphate-dependent dephosphorylation (phosphorolysis) of seryl-phosphorylated HPr (P-Ser-HPr). The chain is HPr kinase/phosphorylase from Bordetella petrii (strain ATCC BAA-461 / DSM 12804 / CCUG 43448).